The sequence spans 209 residues: Imidazole glycerol phosphate synthase subunit HisH (209 aa).

The 205-residue stretch at 1–205 (MIAIIDYGMG…QGVVEAWKSS (205 aa)) folds into the Glutamine amidotransferase type-1 domain. The active-site Nucleophile is Cys79. Residues His180 and Glu182 contribute to the active site.

As to quaternary structure, heterodimer of HisH and HisF.

The protein resides in the cytoplasm. It carries out the reaction 5-[(5-phospho-1-deoxy-D-ribulos-1-ylimino)methylamino]-1-(5-phospho-beta-D-ribosyl)imidazole-4-carboxamide + L-glutamine = D-erythro-1-(imidazol-4-yl)glycerol 3-phosphate + 5-amino-1-(5-phospho-beta-D-ribosyl)imidazole-4-carboxamide + L-glutamate + H(+). The catalysed reaction is L-glutamine + H2O = L-glutamate + NH4(+). It participates in amino-acid biosynthesis; L-histidine biosynthesis; L-histidine from 5-phospho-alpha-D-ribose 1-diphosphate: step 5/9. IGPS catalyzes the conversion of PRFAR and glutamine to IGP, AICAR and glutamate. The HisH subunit catalyzes the hydrolysis of glutamine to glutamate and ammonia as part of the synthesis of IGP and AICAR. The resulting ammonia molecule is channeled to the active site of HisF. This chain is Imidazole glycerol phosphate synthase subunit HisH, found in Bacillus cereus (strain B4264).